A 547-amino-acid polypeptide reads, in one-letter code: Chaperonin GroEL (547 aa).

Residues 30-33 (TLGP), lysine 51, 87-91 (DGTTT), glycine 415, and aspartate 496 each bind ATP.

The protein belongs to the chaperonin (HSP60) family. As to quaternary structure, forms a cylinder of 14 subunits composed of two heptameric rings stacked back-to-back. Interacts with the co-chaperonin GroES.

The protein resides in the cytoplasm. It catalyses the reaction ATP + H2O + a folded polypeptide = ADP + phosphate + an unfolded polypeptide.. Functionally, together with its co-chaperonin GroES, plays an essential role in assisting protein folding. The GroEL-GroES system forms a nano-cage that allows encapsulation of the non-native substrate proteins and provides a physical environment optimized to promote and accelerate protein folding. This is Chaperonin GroEL from Histophilus somni (strain 129Pt) (Haemophilus somnus).